Here is a 134-residue protein sequence, read N- to C-terminus: uncharacterized protein (134 aa).

Transmembrane regions (helical) follow at residues P9–A29, M49–F69, and A107–L127.

Belongs to the DoxX family.

It is found in the cell membrane. This is an uncharacterized protein from Haemophilus influenzae (strain ATCC 51907 / DSM 11121 / KW20 / Rd).